A 273-amino-acid chain; its full sequence is Oxidized low-density lipoprotein receptor 1 (273 aa).

Residues 1–22 (MTFDDLKIQTVKDQPDEKSNGK) form a disordered region. Residues 1-36 (MTFDDLKIQTVKDQPDEKSNGKKAKGLQFLYSPWWC) lie on the Cytoplasmic side of the membrane. S-palmitoyl cysteine attachment occurs at residues C36 and C46. A helical; Signal-anchor for type II membrane protein transmembrane segment spans residues 37 to 57 (LAAATLGVLCLGLVVTIMVLG). The segment at 58–150 (MQLSQVSDLL…SAPCPQDWIW (93 aa)) is neck. The Extracellular segment spans residues 58–273 (MQLSQVSDLL…CQKKANLRAQ (216 aa)). A coiled-coil region spans residues 64–123 (SDLLTQEQANLTHQKKKLEGQISARQQAEEASQESENELKEMIETLARKLNEKSKEQMEL). Residue N73 is glycosylated (N-linked (GlcNAc...) asparagine). N139 carries an N-linked (GlcNAc...) (complex) asparagine glycan. Intrachain disulfides connect C144-C155, C172-C264, and C243-C256. Positions 151–265 (HGENCYLFSS…CILAAFSICQ (115 aa)) constitute a C-type lectin domain.

Homodimer; disulfide-linked. May form a hexamer composed of 3 homodimers. Interacts with HSP70. In terms of assembly, (Microbial infection) Binds to the head and beginning of the coiled stalk of N.meningitidis adhesin A (nadA) variant 3; binding can be abrogated by monoclonal antibodies against the specific regions of NadA. Binding occurs in protein microarrays, in solution and when LOX-1 is expressed on the cell surface. Post-translationally, the intrachain disulfide-bonds prevent N-glycosylation at some sites. In terms of processing, N-glycosylated. In terms of tissue distribution, expressed at high level in endothelial cells and vascular-rich organs such as placenta, lung, liver and brain, aortic intima, bone marrow, spinal cord and substantia nigra. Also expressed at the surface of dendritic cells. Widely expressed at intermediate and low level.

The protein resides in the cell membrane. It localises to the membrane raft. The protein localises to the secreted. In terms of biological role, receptor that mediates the recognition, internalization and degradation of oxidatively modified low density lipoprotein (oxLDL) by vascular endothelial cells. OxLDL is a marker of atherosclerosis that induces vascular endothelial cell activation and dysfunction, resulting in pro-inflammatory responses, pro-oxidative conditions and apoptosis. Its association with oxLDL induces the activation of NF-kappa-B through an increased production of intracellular reactive oxygen and a variety of pro-atherogenic cellular responses including a reduction of nitric oxide (NO) release, monocyte adhesion and apoptosis. In addition to binding oxLDL, it acts as a receptor for the HSP70 protein involved in antigen cross-presentation to naive T-cells in dendritic cells, thereby participating in cell-mediated antigen cross-presentation. Also involved in inflammatory process, by acting as a leukocyte-adhesion molecule at the vascular interface in endotoxin-induced inflammation. Also acts as a receptor for advanced glycation end (AGE) products, activated platelets, monocytes, apoptotic cells and both Gram-negative and Gram-positive bacteria. Functionally, (Microbial infection) May serve as a receptor for adhesin A variant 3 (nadA) of N.meningitidis. The chain is Oxidized low-density lipoprotein receptor 1 (OLR1) from Homo sapiens (Human).